The sequence spans 357 residues: GPI mannosyltransferase 2 (357 aa).

The next 8 membrane-spanning stretches (helical) occupy residues 6 to 26 (TLIV…LVVP), 86 to 106 (AIAY…ALML), 128 to 148 (ILSP…FALL), 167 to 187 (VLGA…PFLF), 201 to 221 (GVSV…TQYL), 257 to 277 (YWTA…YLMY), 286 to 306 (LVPF…MWHV), and 334 to 354 (YVVR…GAYL).

It belongs to the PIGV family.

The protein resides in the endoplasmic reticulum membrane. The protein operates within glycolipid biosynthesis; glycosylphosphatidylinositol-anchor biosynthesis. In terms of biological role, mannosyltransferase involved in glycosylphosphatidylinositol-anchor biosynthesis. Transfers the second mannose to the glycosylphosphatidylinositol during GPI precursor assembly. The protein is GPI mannosyltransferase 2 (GPI18) of Yarrowia lipolytica (strain CLIB 122 / E 150) (Yeast).